The primary structure comprises 1358 residues: DNA-directed RNA polymerase subunit beta (1358 aa).

It belongs to the RNA polymerase beta chain family. In terms of assembly, the RNAP catalytic core consists of 2 alpha, 1 beta, 1 beta' and 1 omega subunit. When a sigma factor is associated with the core the holoenzyme is formed, which can initiate transcription.

It catalyses the reaction RNA(n) + a ribonucleoside 5'-triphosphate = RNA(n+1) + diphosphate. DNA-dependent RNA polymerase catalyzes the transcription of DNA into RNA using the four ribonucleoside triphosphates as substrates. The protein is DNA-directed RNA polymerase subunit beta of Azotobacter vinelandii (strain DJ / ATCC BAA-1303).